A 259-amino-acid chain; its full sequence is Global transcriptional regulator CodY (259 aa).

The interval methionine 1–leucine 155 is GAF domain. Positions alanine 203 to arginine 222 form a DNA-binding region, H-T-H motif. Serine 215 carries the post-translational modification Phosphoserine.

The protein belongs to the CodY family.

The protein resides in the cytoplasm. Functionally, DNA-binding global transcriptional regulator which is involved in the adaptive response to starvation and acts by directly or indirectly controlling the expression of numerous genes in response to nutrient availability. During rapid exponential growth, CodY is highly active and represses genes whose products allow adaptation to nutrient depletion. The sequence is that of Global transcriptional regulator CodY from Halalkalibacterium halodurans (strain ATCC BAA-125 / DSM 18197 / FERM 7344 / JCM 9153 / C-125) (Bacillus halodurans).